The primary structure comprises 430 residues: Microtubule-associated protein tau (430 aa).

The segment covering 1 to 16 (MAEPRQEFDTAEDHAE) has biased composition (basic and acidic residues). Positions 1 to 245 (MAEPRQEFDT…PVPMPDLKNV (245 aa)) are disordered. N-acetylalanine is present on alanine 2. At tyrosine 18 the chain carries Phosphotyrosine. A Glycyl lysine isopeptide (Lys-Gly) (interchain with G-Cter in ubiquitin) cross-link involves residue lysine 31. A phosphoserine mark is found at serine 33 and serine 48. Residues 48-58 (SETSDAKSTPT) show a composition bias toward polar residues. Phosphothreonine is present on residues threonine 56, threonine 58, and threonine 98. Residues 117–133 (KGKEGTGSEDRKAKGAD) show a composition bias toward basic and acidic residues. A Phosphothreonine modification is found at threonine 142. Arginine 144 is modified (omega-N-methylarginine). Lysine 152 carries the post-translational modification N6,N6-dimethyllysine; alternate. Lysine 152 carries the post-translational modification N6-acetyllysine; alternate. 4 positions are modified to phosphothreonine: threonine 158, threonine 164, threonine 165, and threonine 170. Residues 161–203 (PAKTTPSPKTPPGTGEPAKSGDRSGYSSPGSPGTPGSRSRTPS) are compositionally biased toward low complexity. 2 positions are modified to phosphoserine: serine 180 and serine 184. At tyrosine 186 the chain carries Phosphotyrosine. Phosphoserine is present on residues serine 187, serine 188, and serine 191. Residues threonine 194 and threonine 201 each carry the phosphothreonine modification. Serine 203 bears the Phosphoserine mark. Threonine 206 is subject to Phosphothreonine. Lysine 214 carries the N6-acetyllysine modification. A Phosphothreonine modification is found at threonine 220. Residues serine 224 and serine 226 each carry the phosphoserine modification. 4 Tau/MAP repeats span residues 233–263 (QTAPVPMPDLKNVRSKIGSTENLKHQPGGGK), 264–294 (VQIINKKLDLSNVQSKCGSKDNIKHVPGGGS), 295–325 (VQIVYKPVDLSKVTSKCGSLGNIHHKPGGGQ), and 326–357 (VEVKSEKLDFKDRVQSKIGSLDNITHVPGGGN). A Glycyl lysine isopeptide (Lys-Gly) (interchain with G-Cter in ubiquitin) cross-link involves residue lysine 243. Lysine 248 carries the N6-acetyllysine; alternate modification. Lysine 248 carries the N6-methyllysine; alternate modification. A Glycyl lysine isopeptide (Lys-Gly) (interchain with G-Cter in ubiquitin); alternate cross-link involves residue lysine 248. Serine 251 is modified (phosphoserine). A Glycyl lysine isopeptide (Lys-Gly) (interchain with G-Cter in ubiquitin) cross-link involves residue lysine 256. The residue at position 270 (lysine 270) is an N6-acetyllysine; alternate. A Glycyl lysine isopeptide (Lys-Gly) (interchain with G-Cter in ubiquitin); alternate cross-link involves residue lysine 270. Residues serine 274 and serine 278 each carry the phosphoserine modification. Lysine 279 is subject to N6-acetyllysine. The cysteines at positions 280 and 311 are disulfide-linked. Serine 282 carries the phosphoserine modification. Lysine 287 carries the N6-acetyllysine; alternate modification. A Glycyl lysine isopeptide (Lys-Gly) (interchain with G-Cter in ubiquitin); alternate cross-link involves residue lysine 287. Serine 294 carries the phosphoserine modification. Residue lysine 300 is modified to N6,N6-dimethyllysine; alternate. An N6-acetyllysine; alternate mark is found at lysine 300, lysine 306, and lysine 310. Residues lysine 300, lysine 306, and lysine 310 each participate in a glycyl lysine isopeptide (Lys-Gly) (interchain with G-Cter in ubiquitin); alternate cross-link. Phosphoserine is present on serine 313. N6-acetyllysine; alternate is present on residues lysine 320, lysine 332, and lysine 336. Residues lysine 320, lysine 332, and lysine 336 each participate in a glycyl lysine isopeptide (Lys-Gly) (interchain with G-Cter in ubiquitin); alternate cross-link. An Omega-N-methylarginine modification is found at arginine 338. At serine 341 the chain carries Phosphoserine. Residue lysine 342 forms a Glycyl lysine isopeptide (Lys-Gly) (interchain with G-Cter in ubiquitin) linkage. Serine 345 carries the post-translational modification Phosphoserine. Lysine 358 bears the N6-acetyllysine; alternate mark. Lysine 358 participates in a covalent cross-link: Glycyl lysine isopeptide (Lys-Gly) (interchain with G-Cter in ubiquitin); alternate. Lysine 364 participates in a covalent cross-link: Glycyl lysine isopeptide (Lys-Gly) (interchain with G-Cter in ubiquitin). Lysine 374 bears the N6-acetyllysine; alternate mark. A Glycyl lysine isopeptide (Lys-Gly) (interchain with G-Cter in ubiquitin); alternate cross-link involves residue lysine 374. The residue at position 383 (tyrosine 383) is a Phosphotyrosine. 2 positions are modified to phosphoserine: serine 385 and serine 389. Residues 387 to 406 (VVSGDTSPRHLSNVSSTGSI) form a disordered region. The span at 390-406 (GDTSPRHLSNVSSTGSI) shows a compositional bias: polar residues. A Phosphothreonine modification is found at threonine 392. A phosphoserine mark is found at serine 393, serine 398, serine 405, and serine 411. Position 416 is a phosphothreonine (threonine 416).

Interacts with MARK1, MARK2, MARK3 and MARK4. Interacts with SQSTM1 when polyubiquitinated. Interacts with PSMC2 through SQSTM1. Interacts with FKBP4. Binds to CSNK1D. Interacts with SGK1. Interacts with PIN1. Interacts with LRRK2. Interacts with LRP1, leading to endocytosis; this interaction is reduced in the presence of LRPAP1/RAP. Post-translationally, polyubiquitinated. Requires functional TRAF6 and may provoke SQSTM1-dependent degradation by the proteasome. In terms of processing, phosphorylation at various serine and threonine residues in S-P or T-P motifs by proline-directed protein kinases (PDPK1, CDK1, CDK5, GSK3, MAPK) (a few sites per protein in interphase, more in mitosis), and at serine residues in K-X-G-S motifs by MAP/microtubule affinity-regulating kinase (MARK1, MARK2, MARK3 or MARK4), causing detachment from microtubules, and their disassembly. Phosphorylation at Ser-345 by BRSK1 and BRSK2 in neurons affects ability to bind microtubules and plays a role in neuron polarization. Phosphorylated by PHK. Dephosphorylation at several serine and threonine residues by the serine/threonine phosphatase PPP5C. Hyperphosphorylated (in particular at Thr-170, Ser-191, Thr-194, Ser-251, and Ser-345) during hibernation. Phosphorylation is fully reversible after arousal. Highly phosphorylated tau contains a number of paired helical filaments (PHFs)-like epitopes. PHF-like phosphorylation is not associated with fibril formation. Distribution of PHF-like tau is more intense in the entorhinal cortex, hippocampus and isocortical areas. PHF-like phosphorylation-dephosphorylation during hibernation cycle is synchronized with regression-re-establishment of afferentation. It may reflect a protective mechanism in an unfavorable environment.

The protein resides in the cytoplasm. It is found in the cytosol. The protein localises to the cell membrane. Its subcellular location is the cytoskeleton. It localises to the cell projection. The protein resides in the axon. It is found in the dendrite. Its function is as follows. Promotes microtubule assembly and stability, and might be involved in the establishment and maintenance of neuronal polarity. The C-terminus binds axonal microtubules while the N-terminus binds neural plasma membrane components, suggesting that tau functions as a linker protein between both. Axonal polarity is predetermined by tau localization (in the neuronal cell) in the domain of the cell body defined by the centrosome. The short isoforms allow plasticity of the cytoskeleton whereas the longer isoforms may preferentially play a role in its stabilization. The chain is Microtubule-associated protein tau (MAPT) from Spermophilus citellus (European ground squirrel).